The primary structure comprises 441 residues: Ribulose bisphosphate carboxylase large chain (441 aa).

Lysine 5 bears the N6,N6,N6-trimethyllysine mark. 2 residues coordinate substrate: asparagine 114 and threonine 164. Lysine 166 acts as the Proton acceptor in catalysis. Lysine 168 contacts substrate. Mg(2+) contacts are provided by lysine 192, aspartate 194, and glutamate 195. Lysine 192 bears the N6-carboxylysine mark. The active-site Proton acceptor is the histidine 285. Substrate-binding residues include arginine 286, histidine 318, and serine 370.

Belongs to the RuBisCO large chain family. Type I subfamily. In terms of assembly, heterohexadecamer of 8 large chains and 8 small chains; disulfide-linked. The disulfide link is formed within the large subunit homodimers. The cofactor is Mg(2+). In terms of processing, the disulfide bond which can form in the large chain dimeric partners within the hexadecamer appears to be associated with oxidative stress and protein turnover.

Its subcellular location is the plastid. The protein resides in the chloroplast. It catalyses the reaction 2 (2R)-3-phosphoglycerate + 2 H(+) = D-ribulose 1,5-bisphosphate + CO2 + H2O. The catalysed reaction is D-ribulose 1,5-bisphosphate + O2 = 2-phosphoglycolate + (2R)-3-phosphoglycerate + 2 H(+). In terms of biological role, ruBisCO catalyzes two reactions: the carboxylation of D-ribulose 1,5-bisphosphate, the primary event in carbon dioxide fixation, as well as the oxidative fragmentation of the pentose substrate in the photorespiration process. Both reactions occur simultaneously and in competition at the same active site. The protein is Ribulose bisphosphate carboxylase large chain of Argyrochosma delicatula (Delicate cloak fern).